The primary structure comprises 212 residues: Large ribosomal subunit protein uL3 (212 aa).

Residue Gln153 is modified to N5-methylglutamine.

The protein belongs to the universal ribosomal protein uL3 family. In terms of assembly, part of the 50S ribosomal subunit. Forms a cluster with proteins L14 and L19. Post-translationally, methylated by PrmB.

Its function is as follows. One of the primary rRNA binding proteins, it binds directly near the 3'-end of the 23S rRNA, where it nucleates assembly of the 50S subunit. In Shewanella frigidimarina (strain NCIMB 400), this protein is Large ribosomal subunit protein uL3.